The following is a 157-amino-acid chain: 2-C-methyl-D-erythritol 2,4-cyclodiphosphate synthase (157 aa).

Residues D8 and H10 each coordinate a divalent metal cation. Residues 8-10 and 34-35 contribute to the 4-CDP-2-C-methyl-D-erythritol 2-phosphate site; these read DVH and HS. H42 is a binding site for a divalent metal cation. Residues 56-58, 61-65, 132-135, F139, and R142 contribute to the 4-CDP-2-C-methyl-D-erythritol 2-phosphate site; these read DIG, FPDNE, and TTTE.

This sequence belongs to the IspF family. Homotrimer. A divalent metal cation serves as cofactor.

The catalysed reaction is 4-CDP-2-C-methyl-D-erythritol 2-phosphate = 2-C-methyl-D-erythritol 2,4-cyclic diphosphate + CMP. The protein operates within isoprenoid biosynthesis; isopentenyl diphosphate biosynthesis via DXP pathway; isopentenyl diphosphate from 1-deoxy-D-xylulose 5-phosphate: step 4/6. Its function is as follows. Involved in the biosynthesis of isopentenyl diphosphate (IPP) and dimethylallyl diphosphate (DMAPP), two major building blocks of isoprenoid compounds. Catalyzes the conversion of 4-diphosphocytidyl-2-C-methyl-D-erythritol 2-phosphate (CDP-ME2P) to 2-C-methyl-D-erythritol 2,4-cyclodiphosphate (ME-CPP) with a corresponding release of cytidine 5-monophosphate (CMP). The polypeptide is 2-C-methyl-D-erythritol 2,4-cyclodiphosphate synthase (Desulforamulus reducens (strain ATCC BAA-1160 / DSM 100696 / MI-1) (Desulfotomaculum reducens)).